We begin with the raw amino-acid sequence, 759 residues long: TSK-associating protein 1 (759 aa).

The signal sequence occupies residues 1-29 (MEIYTMKTNFLVLALSLCILLSSFHEVSC). A disordered region spans residues 55 to 74 (GKDDEDQSAKIQSENQNNTT). Positions 63 to 74 (AKIQSENQNNTT) are enriched in polar residues. EFE repeat repeat units follow at residues 91-138 (VGSV…DEEL), 139-176 (SAHR…DEEH), 177-215 (SAKR…DEEH), 216-254 (SAKR…DEEQ), 255-293 (SAKR…EEEH), 294-329 (AAKG…DKEH), 330-368 (FTAA…DDEQ), 369-407 (SAKR…NEEQ), 408-443 (SAKR…LEEE), and 444-473 (SAKR…DKEE). The tract at residues 91–473 (VGSVSDESVG…GINAKADKEE (383 aa)) is 10 X approximate EFE repeat. 2 coiled-coil regions span residues 142 to 461 (RQKM…FEEA) and 685 to 734 (IKKL…AKDE). Disordered regions lie at residues 154-184 (EAAS…QSLL), 200-219 (QLKV…SAKR), 271-332 (AASK…HFTA), and 393-414 (LKAN…RKSM).

In terms of assembly, homomultimer. Interacts (via C-terminal domain) with GIP1, CSN1 (via N-terminal domain) and TSK (via TPR repeats). In terms of processing, binds calcium through the EFE repeats. Expressed preferentially in flowers and shoot apex.

The protein resides in the endoplasmic reticulum lumen. It localises to the nucleus envelope. It is found in the cytoplasm. Functionally, involved in seedling development in the dark. May be involved, when interacting with TSK, in the organization of spindle microtubules and may participate, when interacting with GIP1, in structural links between the nuclear envelope and the cytoskeleton. The protein is TSK-associating protein 1 (TSA1) of Arabidopsis thaliana (Mouse-ear cress).